Consider the following 512-residue polypeptide: Maturase K (512 aa).

This sequence belongs to the intron maturase 2 family. MatK subfamily.

Its subcellular location is the plastid. The protein localises to the chloroplast. Its function is as follows. Usually encoded in the trnK tRNA gene intron. Probably assists in splicing its own and other chloroplast group II introns. This chain is Maturase K, found in Piper cenocladum (Ant piper).